The primary structure comprises 229 residues: MNSIKFPVLDRTTKNSVISTTLNDLSNWSRLSSLWPLLYGTSCCFIEFASLIGSRFDFDRYGLVPRSSPRQADLILTAGTVTMKMAPSLVRLYEQMPEPKYVIAMGACTITGGMFSTDSYSTVRGVDKLIPVDVYLPGCPPKPEAVIDAITKLRTKIAREIYKDQIRPQQGNRCFTTNHKFLIVRSTDTGNSDQELLYPPSSTSEISTETFFKYKSPVSSHELVNSGGV.

[4Fe-4S] cluster-binding residues include cysteine 43, cysteine 44, cysteine 108, and cysteine 139.

It belongs to the complex I 20 kDa subunit family. In terms of assembly, NDH is composed of at least 16 different subunits, 5 of which are encoded in the nucleus. [4Fe-4S] cluster is required as a cofactor.

The protein resides in the plastid. Its subcellular location is the chloroplast thylakoid membrane. It catalyses the reaction a plastoquinone + NADH + (n+1) H(+)(in) = a plastoquinol + NAD(+) + n H(+)(out). It carries out the reaction a plastoquinone + NADPH + (n+1) H(+)(in) = a plastoquinol + NADP(+) + n H(+)(out). In terms of biological role, NDH shuttles electrons from NAD(P)H:plastoquinone, via FMN and iron-sulfur (Fe-S) centers, to quinones in the photosynthetic chain and possibly in a chloroplast respiratory chain. The immediate electron acceptor for the enzyme in this species is believed to be plastoquinone. Couples the redox reaction to proton translocation, and thus conserves the redox energy in a proton gradient. The sequence is that of NAD(P)H-quinone oxidoreductase subunit K, chloroplastic from Aethionema grandiflorum (Persian stone-cress).